The primary structure comprises 252 residues: MRAISSLAGPRALAAFGRNDIRGTYRDPLLVMLVIAPVIWTTGVALLTPLFTEMLARRYGFDLVGYYPLILTAFLLLTSIIVAGALAAFLVLDDVDAGTMTALRVTPVPLSVFFGYRAATVMVVTTIYVVATMSCSGILEPGLVSSLIPIGLVAGLSAVVTLLLILAVANNKIQGLAMVRALGMLIAGLPCLPWFISSNWNLAFGVLPPYWAAKAFWVASDHGTWWPYLVGGAVYNLAIVWVLFRRFRAKHA.

Transmembrane regions (helical) follow at residues 31-51 (VMLV…TPLF), 69-89 (LILT…LAAF), 119-139 (ATVM…SGIL), 148-168 (IPIG…ILAV), 176-196 (LAMV…PWFI), and 224-244 (TWWP…WVLF).

In terms of assembly, the complex is composed of 2 ATP-binding proteins and 2 transmembrane proteins.

It is found in the cell membrane. Its function is as follows. Part of the ABC transporter complex involved in fluoroquinolones export. Probably responsible for the translocation of the substrate across the membrane. The chain is Fluoroquinolones export permease protein MT2760 from Mycobacterium tuberculosis (strain CDC 1551 / Oshkosh).